A 777-amino-acid polypeptide reads, in one-letter code: MDTEALKKSLLKKFQEVTADRLQKIQLGVLDLEKETADQAAEDVARELHTMKGEARMLGLAAIGQLAHAAEDVLRAEREGKTATEVATDVLLRACDVLSDLNEDLSGANTGNPASEEMVRMLAEVSGQTPPAIAGARPVAPPPAPPPAPVAAPVVTPAAVAAPPAPVQAPVAPPPTQAPVAEPGAHAAAAAPHPAAAHGRDEEAPSAAKSAVADRSIRVNVEVLDALGLLAGDLLVESARGRLRSSETEALFERFSRLGDRFLRLAEEIDISNEVREQLDRVESDLHMLRDDAFRFVRRNDDGINTLHGNLAKMADHVAEARLVPLSTVFDAFPRAVREMSRTQGKEVDLVIENADIGVDRSMLGDVRDALVHLLRNSVDHGVESPDTRQQLGKPLNGRIRIRVRVDGDMLHIEVEDDGRGIDPERLRQAAISKRLINAVQAAALSEREAIELIFRPGFSTRDQVSELSGRGVGMDVVKRKVETLGGSVGVSSRIGRGSTITLRLPQSLALMKVLLVRLGDDVYGMPAADVEAVMRVKPDDRLEIFGTLAVRHRGKPTALVALGPLLGLNGGNRFDKPPAVVVRHGEDHAALVVDGFVDEREVAVKPCGGEFLKAAPFIAGTAALEDGRIAVLLHVPDIMAEVRRMARPVTQAPAAKRLRVLLVDDSPIARATEGALVKALGHSVEEAQDGEEAYVKVQNNTYDLILTDVQMPKLDGFSLARRLKSTPAVARIPVIILSSLASPEDKRRGLDAGADAYLVKGELGVEVLAQAIDRLT.

An HPt domain is found at 1 to 108; sequence MDTEALKKSL…SDLNEDLSGA (108 aa). Phosphohistidine; by autocatalysis is present on His-49. Disordered stretches follow at residues 129–149 and 164–212; these read TPPAIAGARPVAPPPAPPPAP and PAPV…KSAV. 2 stretches are compositionally biased toward pro residues: residues 139–149 and 164–177; these read VAPPPAPPPAP and PAPVQAPVAPPPTQ. Residues 178-197 show a composition bias toward low complexity; that stretch reads APVAEPGAHAAAAAPHPAAA. Positions 270 to 509 constitute a Histidine kinase domain; sequence DISNEVREQL…TITLRLPQSL (240 aa). A CheW-like domain is found at 511–645; it reads LMKVLLVRLG…VPDIMAEVRR (135 aa). The Response regulatory domain maps to 660-776; sequence RVLLVDDSPI…EVLAQAIDRL (117 aa). Position 709 is a 4-aspartylphosphate (Asp-709).

It carries out the reaction ATP + protein L-histidine = ADP + protein N-phospho-L-histidine.. In terms of biological role, frzE is involved in a sensory transduction pathway that controls the frequency at which cells reverse their gliding direction. FrzE seems to be capable of autophosphorylating itself on a histidine residue and then to transfer that group to an aspartate residue in the C-terminal part of the protein. The chain is Gliding motility regulatory protein (frzE) from Myxococcus xanthus.